An 87-amino-acid polypeptide reads, in one-letter code: Small ribosomal subunit protein bS20 (87 aa).

A disordered region spans residues 1-22 (MANIKSQIKRIGTNKKAQERNK).

This sequence belongs to the bacterial ribosomal protein bS20 family.

Its function is as follows. Binds directly to 16S ribosomal RNA. This is Small ribosomal subunit protein bS20 from Clavibacter michiganensis subsp. michiganensis (strain NCPPB 382).